Here is a 941-residue protein sequence, read N- to C-terminus: MIGALARKIFGSANDRRVKGYQARVDAINAMEPEIAALSDEALKARTAEFKQQLASGKTLDDILVPAFATVREAAKRTLGQRHFDVQLIGGMVLHEGDIAEMKTGEGKTLVATLAVYLNALTGRGVHVVTVNDYLAKRDAEWMSQVYSFLGLTTGIIIHGLDDPERQAAYACDITYGTNNEFGFDYLRDNMKYRLEDMVQRDHVFAIVDEVDSILIDEARTPLIISGPLDDRSEFYNTIDTFIPKLEPADYEIDEKQRTVTLTEGGMEKLEQMLREAGLLKGESLYDIENVSVVHHVNQALRAHRLFTRDKDYIVRDGEVVIIDEFTGRMMPGRRYSEGLHQALEAKEHQPVQPENQTLASITFQNYFRMYEKLGGMTGTAATEADEFFDIYKLEVLEIPTNLPIARLDEDDEVYRSSREKYAAILAEIERANGRMQPVLVGTASIEKSEVLADFLKEHGYKQIDFANPKSMAKLYDAARAGKPSKLFAVLNARFHEQEAYIVAEAGVPGAITIATNMAGRGTDIKLGGSLEMRAAAATAGIEDEAEKQKIVEGIKADIEKFKEMVLAAEETVELEPGKPGGKTIKKPGGLYIIGSERHESRRIDNQLRGRAGRQGDPGRTKFYLSLDDDLMRIFGSDRLEGMLQRLGLKEGEAIIHPWINKALEKAQQKVEARNFDIRKNLLKYDDVQNDQRKVIFEQRIDLMRDQNVSETVTDMRHTLIEGLVAKHIPEHAYPEQWDVSGLREELQRVIGLDLPVEDWAKEEGIADEEMLSRLQQRVDEHMAAKSAQWGPEVMRYVEKTILLQTLDHLWREHLIMLDHLRQVIGLRGYGQRDPLQEYKSEAFELFESLISHMREAVTAQLMRVEIVPPDEQPPMPAMEAHKLDPNTGEDQVAQAQSGLAPVAPAKRDPANPATWGKVGRNEDCPCGSGRKFKHCHGRYA.

ATP is bound by residues Gln87, 105 to 109 (GEGKT), and Asp524. A disordered region spans residues 871–919 (DEQPPMPAMEAHKLDPNTGEDQVAQAQSGLAPVAPAKRDPANPATWGKV). Zn(2+)-binding residues include Cys925, Cys927, Cys936, and His937.

Belongs to the SecA family. As to quaternary structure, monomer and homodimer. Part of the essential Sec protein translocation apparatus which comprises SecA, SecYEG and auxiliary proteins SecDF-YajC and YidC. Requires Zn(2+) as cofactor.

The protein resides in the cell inner membrane. It localises to the cytoplasm. It carries out the reaction ATP + H2O + cellular proteinSide 1 = ADP + phosphate + cellular proteinSide 2.. Part of the Sec protein translocase complex. Interacts with the SecYEG preprotein conducting channel. Has a central role in coupling the hydrolysis of ATP to the transfer of proteins into and across the cell membrane, serving both as a receptor for the preprotein-SecB complex and as an ATP-driven molecular motor driving the stepwise translocation of polypeptide chains across the membrane. This Afipia carboxidovorans (strain ATCC 49405 / DSM 1227 / KCTC 32145 / OM5) (Oligotropha carboxidovorans) protein is Protein translocase subunit SecA.